Here is a 1019-residue protein sequence, read N- to C-terminus: UPF0182 protein Tery_0938 (1019 aa).

A run of 9 helical transmembrane segments spans residues 23–43 (IHIL…GFST), 67–87 (TETW…LVNL), 128–148 (LSLS…GLIL), 192–212 (LWLL…PILW), 213–233 (LSVF…SHWA), 270–290 (FWLI…YLLS), 313–333 (LGGG…FELL), 355–375 (YVFL…QAIF), and 416–436 (AILT…PKIV).

This sequence belongs to the UPF0182 family.

It is found in the cell membrane. This Trichodesmium erythraeum (strain IMS101) protein is UPF0182 protein Tery_0938.